Here is an 82-residue protein sequence, read N- to C-terminus: Transcription elongation factor 1 homolog (82 aa).

Zn(2+)-binding residues include cysteine 26, cysteine 29, cysteine 50, and cysteine 53.

It belongs to the ELOF1 family.

Its subcellular location is the nucleus. Its function is as follows. Transcription elongation factor implicated in the maintenance of proper chromatin structure in actively transcribed regions. This chain is Transcription elongation factor 1 homolog, found in Drosophila melanogaster (Fruit fly).